The sequence spans 111 residues: Nucleoid-associated protein Cpar_0834 (111 aa).

The protein belongs to the YbaB/EbfC family. Homodimer.

The protein localises to the cytoplasm. It is found in the nucleoid. Its function is as follows. Binds to DNA and alters its conformation. May be involved in regulation of gene expression, nucleoid organization and DNA protection. The chain is Nucleoid-associated protein Cpar_0834 from Chlorobaculum parvum (strain DSM 263 / NCIMB 8327) (Chlorobium vibrioforme subsp. thiosulfatophilum).